The chain runs to 124 residues: Large ribosomal subunit protein bL17 (124 aa).

It belongs to the bacterial ribosomal protein bL17 family. Part of the 50S ribosomal subunit. Contacts protein L32.

The sequence is that of Large ribosomal subunit protein bL17 from Persephonella marina (strain DSM 14350 / EX-H1).